Reading from the N-terminus, the 539-residue chain is MSWKVVIIFSLLITPQHGLKESYLEESCSTITEGYLSVLRTGWYTNVFTLEVGDVENLTCSDGPSLIKTELDLTKSALRELKTVSADQLAREEQIENPRQSRFVLGAIALGVATAAAVTAGVAIAKTIRLESEVTAIKNALKTTNEAVSTLGNGVRVLATAVRELKDFVSKNLTRAINKNKCDIDDLKMAVSFSQFNRRFLNVVRQFSDNAGITPAISLDLMTDAELARAVSNMPTSAGQIKLMLENRAMVRRKGFGILIGVYGSSVIYMVQLPIFGVIDTPCWIVKAAPSCSGKKGNYACLLREDQGWYCQNAGSTVYYPNEKDCETRGDHVFCDTAAGINVAEQSKECNINISTTNYPCKVSTGRHPISMVALSPLGALVACYKGVSCSIGSNRVGIIKQLNKGCSYITNQDADTVTIDNTVYQLSKVEGEQHVIKGRPVSSSFDPIKFPEDQFNVALDQVFENIENSQALVDQSNRILSSAEKGNTGFIIVIILIAVLGSSMILVSIFIIIKKTKKPTGAPPELSGVTNNGFIPHS.

The signal sequence occupies residues 1 to 18; the sequence is MSWKVVIIFSLLITPQHG. Cystine bridges form between Cys28/Cys407, Cys60/Cys182, Cys283/Cys311, Cys292/Cys301, Cys326/Cys335, Cys350/Cys361, and Cys384/Cys390. Residue Asn57 is glycosylated (N-linked (GlcNAc...) asparagine; by host). The interval 103-127 is fusion peptide; it reads FVLGAIALGVATAAAVTAGVAIAKT. Asn172 carries N-linked (GlcNAc...) asparagine; by host glycosylation. A Cell attachment site motif is present at residues 329-331; that stretch reads RGD. An N-linked (GlcNAc...) asparagine; by host glycan is attached at Asn353. The helical transmembrane segment at 492–512 threads the bilayer; it reads IIVIILIAVLGSSMILVSIFI. The disordered stretch occupies residues 520–539; that stretch reads PTGAPPELSGVTNNGFIPHS. Positions 529–539 are enriched in polar residues; that stretch reads GVTNNGFIPHS.

This sequence belongs to the paramyxoviruses fusion glycoprotein family. In terms of assembly, homotrimer. Heterodimer with fusion protein F2; disulfide-linked. As a heterodimer with F2, interacts with host heparan sulfate. As a heterodimer with F2, interacts with host integrin ITGAV/ITGB1. Part of a complex composed of F1, F2 and G glycoproteins. Homotrimer. Heterodimer with fusion protein F1; disulfide-linked. As a heterodimer with F1, interacts with host heparan sulfate. As a heterodimer with F2, interacts with host integrin ITGAV/ITGB1. Part of a complex composed of F1, F2 and G glycoproteins. The F glycoprotein is synthesized as a F0 inactive precursor that is heavily N-glycosylated and processed.

Its subcellular location is the virion membrane. It localises to the host cell membrane. Its function is as follows. Inactive precursor that is cleaved to give rise to the mature F1 and F2 fusion glycoproteins. In terms of biological role, class I viral fusion protein. Under the current model, the protein has at least 3 conformational states: pre-fusion native state, pre-hairpin intermediate state, and post-fusion hairpin state. During viral and plasma cell membrane fusion, the coiled coil regions assume a trimer-of-hairpins structure, positioning the fusion peptide in close proximity to the C-terminal region of the ectodomain. The formation of this structure appears to drive apposition and subsequent fusion of viral and cellular membranes leading to delivery of the nucleocapsid into the cytoplasm. This fusion is pH independent and occurs at the plasma or endosomal membrane. The trimer of F1-F2 (F protein) also facilitates the attachment to host cell by binding to host heparan sulfate. Functionally, major determinant of the species specificity of RSV infection. The trimer of F1-F2 (F protein) also facilitates the attachment to host cell by binding to host heparan sulfate. The sequence is that of Fusion glycoprotein F0 (F) from Human metapneumovirus (strain CAN97-83) (HMPV).